Reading from the N-terminus, the 228-residue chain is Ribosomal RNA small subunit methyltransferase G (228 aa).

S-adenosyl-L-methionine contacts are provided by residues glycine 70, leucine 75, 120–121 (AE), and arginine 138. Positions 207–228 (RRGDTRGPNRRVSPRRTGGAPA) are disordered.

This sequence belongs to the methyltransferase superfamily. RNA methyltransferase RsmG family.

It localises to the cytoplasm. Its function is as follows. Specifically methylates the N7 position of guanine in position 518 of 16S rRNA. The sequence is that of Ribosomal RNA small subunit methyltransferase G from Mycobacterium marinum (strain ATCC BAA-535 / M).